The chain runs to 356 residues: uncharacterized protein (356 aa).

Transmembrane regions (helical) follow at residues 258-275, 290-312, and 325-347; these read SALQ…VFYY, PHWL…TEAL, and LVLL…TLFS.

Its subcellular location is the cell membrane. This is an uncharacterized protein from Archaeoglobus fulgidus (strain ATCC 49558 / DSM 4304 / JCM 9628 / NBRC 100126 / VC-16).